Consider the following 1366-residue polypeptide: DNA-directed RNA polymerase subunit beta'' (1366 aa).

4 residues coordinate Zn(2+): Cys-220, Cys-290, Cys-297, and Cys-300.

It belongs to the RNA polymerase beta' chain family. RpoC2 subfamily. As to quaternary structure, in plastids the minimal PEP RNA polymerase catalytic core is composed of four subunits: alpha, beta, beta', and beta''. When a (nuclear-encoded) sigma factor is associated with the core the holoenzyme is formed, which can initiate transcription. Zn(2+) serves as cofactor.

It is found in the plastid. Its subcellular location is the chloroplast. The enzyme catalyses RNA(n) + a ribonucleoside 5'-triphosphate = RNA(n+1) + diphosphate. In terms of biological role, DNA-dependent RNA polymerase catalyzes the transcription of DNA into RNA using the four ribonucleoside triphosphates as substrates. This chain is DNA-directed RNA polymerase subunit beta'', found in Lemna minor (Common duckweed).